Reading from the N-terminus, the 649-residue chain is 1-deoxy-D-xylulose-5-phosphate synthase (649 aa).

Thiamine diphosphate is bound by residues His-74 and 115–117 (GHA). A Mg(2+)-binding site is contributed by Asp-146. Residues 147–148 (GA), Asn-176, Tyr-292, and Glu-375 contribute to the thiamine diphosphate site. Asn-176 serves as a coordination point for Mg(2+).

It belongs to the transketolase family. DXPS subfamily. As to quaternary structure, homodimer. Mg(2+) is required as a cofactor. Thiamine diphosphate serves as cofactor.

It carries out the reaction D-glyceraldehyde 3-phosphate + pyruvate + H(+) = 1-deoxy-D-xylulose 5-phosphate + CO2. It participates in metabolic intermediate biosynthesis; 1-deoxy-D-xylulose 5-phosphate biosynthesis; 1-deoxy-D-xylulose 5-phosphate from D-glyceraldehyde 3-phosphate and pyruvate: step 1/1. Functionally, catalyzes the acyloin condensation reaction between C atoms 2 and 3 of pyruvate and glyceraldehyde 3-phosphate to yield 1-deoxy-D-xylulose-5-phosphate (DXP). In Synechococcus sp. (strain JA-3-3Ab) (Cyanobacteria bacterium Yellowstone A-Prime), this protein is 1-deoxy-D-xylulose-5-phosphate synthase.